The primary structure comprises 303 residues: Aspartate carbamoyltransferase catalytic subunit (303 aa).

Carbamoyl phosphate contacts are provided by arginine 48 and threonine 49. Residue lysine 76 participates in L-aspartate binding. Residues arginine 98, histidine 129, and glutamine 132 each coordinate carbamoyl phosphate. L-aspartate-binding residues include arginine 162 and arginine 214. Residues alanine 257 and proline 258 each contribute to the carbamoyl phosphate site.

This sequence belongs to the aspartate/ornithine carbamoyltransferase superfamily. ATCase family. As to quaternary structure, heterododecamer (2C3:3R2) of six catalytic PyrB chains organized as two trimers (C3), and six regulatory PyrI chains organized as three dimers (R2).

It carries out the reaction carbamoyl phosphate + L-aspartate = N-carbamoyl-L-aspartate + phosphate + H(+). Its pathway is pyrimidine metabolism; UMP biosynthesis via de novo pathway; (S)-dihydroorotate from bicarbonate: step 2/3. Its function is as follows. Catalyzes the condensation of carbamoyl phosphate and aspartate to form carbamoyl aspartate and inorganic phosphate, the committed step in the de novo pyrimidine nucleotide biosynthesis pathway. The chain is Aspartate carbamoyltransferase catalytic subunit from Leuconostoc citreum (strain KM20).